A 689-amino-acid chain; its full sequence is Protein asunder (689 aa).

Positions 521 to 550 (NGARLKLSKAKDQYRLLYRELEQLIQLNAT) form a coiled coil. 2 disordered regions span residues 591 to 619 (SPER…SKRR) and 665 to 689 (GTKD…SVRS). Residues 599-614 (SSVGASGSSNSNSLLK) show a composition bias toward low complexity. The Nuclear localization signal (NLS) motif lies at 613 to 619 (LKASKRR).

This sequence belongs to the Integrator subunit 13 family. As to quaternary structure, belongs to the multiprotein complex Integrator, at least composed of IntS1, IntS2, IntS3, IntS4, omd/IntS5, IntS6, defl/IntS7, IntS8, IntS9, IntS10, IntS11, IntS12, asun/IntS13, IntS14 and IntS15. The core complex associates with protein phosphatase 2A subunits mts/PP2A and Pp2A-29B, to form the Integrator-PP2A (INTAC) complex. Post-translationally, phosphorylated.

The protein localises to the nucleus. Its subcellular location is the cytoplasm. The protein resides in the perinuclear region. In terms of biological role, component of the integrator complex, a multiprotein complex that terminates RNA polymerase II (Pol II) transcription in the promoter-proximal region of genes. The integrator complex provides a quality checkpoint during transcription elongation by driving premature transcription termination of transcripts that are unfavorably configured for transcriptional elongation: the complex terminates transcription by (1) catalyzing dephosphorylation of the C-terminal domain (CTD) of Pol II subunit Polr2A/Rbp1 and Spt5, and (2) degrading the exiting nascent RNA transcript via endonuclease activity. The integrator complex is also involved in the 3'-end processing of the U7 snRNA, and also the spliceosomal snRNAs U1, U2, U4 and U5. The sequence is that of Protein asunder (asun) from Drosophila sechellia (Fruit fly).